A 187-amino-acid polypeptide reads, in one-letter code: Inner membrane-spanning protein YciB (187 aa).

Helical transmembrane passes span 25–45 (ATGA…ALYK), 50–70 (MQLI…FLHD), 76–96 (WKVT…HVMG), 118–138 (INWA…YVAY), and 148–168 (FKVF…GGYI).

This sequence belongs to the YciB family.

It is found in the cell inner membrane. In terms of biological role, plays a role in cell envelope biogenesis, maintenance of cell envelope integrity and membrane homeostasis. The sequence is that of Inner membrane-spanning protein YciB from Vibrio vulnificus (strain CMCP6).